Reading from the N-terminus, the 264-residue chain is MRTLWMALCVLARLWPGALAGCADAGRCCPGRDPACFASGWRQDRVYGTCFCDQACRLTGDCCFDYARACPARPCIVGEWSPWSGCASQCRPTARVRRRAVQQEPQNGGEPCPALEERAGCLEYATPQGEDCGHAFVPAFITTSAFNKERTRQAASPHWTTSTEDAGYCMEFKTESLTHHCALENRPLTRWMQYLREGYTVCVDCQPPAMNSVSLRCSGDGLDSDGNQTLHWQAIGNPRCQGTWKKVRRVEQCSCPAVHSFIFI.

The N-terminal stretch at 1-20 is a signal peptide; sequence MRTLWMALCVLARLWPGALA. Positions 24–75 constitute an SMB domain; the sequence is DAGRCCPGRDPACFASGWRQDRVYGTCFCDQACRLTGDCCFDYARACPARPC. Cystine bridges form between C28–C36, C28–C52, C36–C70, C50–C52, C50–C63, C56–C62, and C63–C70. One can recognise a TSP type-1 domain in the interval 74 to 127; that stretch reads PCIVGEWSPWSGCASQCRPTARVRRRAVQQEPQNGGEPCPALEERAGCLEYATP. An N-linked (GlcNAc...) asparagine glycan is attached at N227.

Belongs to the thrombospondin family.

It is found in the secreted. It localises to the extracellular space. Its subcellular location is the extracellular matrix. The protein is Somatomedin-B and thrombospondin type-1 domain-containing protein (SBSPON) of Bos taurus (Bovine).